Reading from the N-terminus, the 338-residue chain is Holliday junction branch migration complex subunit RuvB (338 aa).

A large ATPase domain (RuvB-L) region spans residues 1-180; sequence MERLLDNKFS…FGIIERLDYY (180 aa). Residues L19, R20, G61, K64, T65, T66, R170, Y180, and R217 each contribute to the ATP site. T65 provides a ligand contact to Mg(2+). The segment at 181–251 is small ATPAse domain (RuvB-S); that stretch reads TVEELSQIVM…VAKSGLEMFE (71 aa). A head domain (RuvB-H) region spans residues 254–338; the sequence is EYGLDLVDRN…FKLKESGDNR (85 aa). Residues K309 and R314 each contribute to the DNA site.

The protein belongs to the RuvB family. Homohexamer. Forms an RuvA(8)-RuvB(12)-Holliday junction (HJ) complex. HJ DNA is sandwiched between 2 RuvA tetramers; dsDNA enters through RuvA and exits via RuvB. An RuvB hexamer assembles on each DNA strand where it exits the tetramer. Each RuvB hexamer is contacted by two RuvA subunits (via domain III) on 2 adjacent RuvB subunits; this complex drives branch migration. In the full resolvosome a probable DNA-RuvA(4)-RuvB(12)-RuvC(2) complex forms which resolves the HJ.

Its subcellular location is the cytoplasm. It carries out the reaction ATP + H2O = ADP + phosphate + H(+). The RuvA-RuvB-RuvC complex processes Holliday junction (HJ) DNA during genetic recombination and DNA repair, while the RuvA-RuvB complex plays an important role in the rescue of blocked DNA replication forks via replication fork reversal (RFR). RuvA specifically binds to HJ cruciform DNA, conferring on it an open structure. The RuvB hexamer acts as an ATP-dependent pump, pulling dsDNA into and through the RuvAB complex. RuvB forms 2 homohexamers on either side of HJ DNA bound by 1 or 2 RuvA tetramers; 4 subunits per hexamer contact DNA at a time. Coordinated motions by a converter formed by DNA-disengaged RuvB subunits stimulates ATP hydrolysis and nucleotide exchange. Immobilization of the converter enables RuvB to convert the ATP-contained energy into a lever motion, pulling 2 nucleotides of DNA out of the RuvA tetramer per ATP hydrolyzed, thus driving DNA branch migration. The RuvB motors rotate together with the DNA substrate, which together with the progressing nucleotide cycle form the mechanistic basis for DNA recombination by continuous HJ branch migration. Branch migration allows RuvC to scan DNA until it finds its consensus sequence, where it cleaves and resolves cruciform DNA. The sequence is that of Holliday junction branch migration complex subunit RuvB from Caldicellulosiruptor bescii (strain ATCC BAA-1888 / DSM 6725 / KCTC 15123 / Z-1320) (Anaerocellum thermophilum).